The sequence spans 305 residues: Ornithine carbamoyltransferase, anabolic (305 aa).

Carbamoyl phosphate contacts are provided by residues 53-56 (STRT), Gln-80, Arg-104, and 131-134 (HPCQ). L-ornithine contacts are provided by residues Asn-162, Asp-219, and 223–224 (SM). Residues 259–260 (CL) and Arg-287 each bind carbamoyl phosphate.

Belongs to the aspartate/ornithine carbamoyltransferase superfamily. OTCase family. Homotrimer.

It localises to the cytoplasm. It catalyses the reaction carbamoyl phosphate + L-ornithine = L-citrulline + phosphate + H(+). Its pathway is amino-acid biosynthesis; L-arginine biosynthesis; L-arginine from L-ornithine and carbamoyl phosphate: step 1/3. Reversibly catalyzes the transfer of the carbamoyl group from carbamoyl phosphate (CP) to the N(epsilon) atom of ornithine (ORN) to produce L-citrulline, which is a substrate for argininosuccinate synthetase (ArgG) involved in the final step in arginine biosynthesis. This is Ornithine carbamoyltransferase, anabolic from Pseudomonas aeruginosa (strain ATCC 15692 / DSM 22644 / CIP 104116 / JCM 14847 / LMG 12228 / 1C / PRS 101 / PAO1).